Reading from the N-terminus, the 159-residue chain is Cyclic pyranopterin monophosphate synthase (159 aa).

Residues 75 to 77 and 113 to 114 each bind substrate; these read LCH and ME. Asp128 is an active-site residue.

It belongs to the MoaC family. In terms of assembly, homohexamer; trimer of dimers.

It catalyses the reaction (8S)-3',8-cyclo-7,8-dihydroguanosine 5'-triphosphate = cyclic pyranopterin phosphate + diphosphate. It functions in the pathway cofactor biosynthesis; molybdopterin biosynthesis. Functionally, catalyzes the conversion of (8S)-3',8-cyclo-7,8-dihydroguanosine 5'-triphosphate to cyclic pyranopterin monophosphate (cPMP). The sequence is that of Cyclic pyranopterin monophosphate synthase from Heliobacterium modesticaldum (strain ATCC 51547 / Ice1).